A 564-amino-acid polypeptide reads, in one-letter code: Cysteine--tRNA ligase CPS1, chloroplastic/mitochondrial (564 aa).

Residues 1-43 constitute a chloroplast and mitochondrion transit peptide; the sequence is MAAAVVVRRAAGLIPLLSSRFGARMPLHRALSQIPPPRFCRLL. Cys-93 lines the Zn(2+) pocket. The 'HIGH' region signature appears at 95-105; that stretch reads VTPYDDSHIGH. Positions 273, 298, and 302 each coordinate Zn(2+). The 'KMSKS' region motif lies at 330 to 334; sequence KMSKS. Residue Lys-333 coordinates ATP.

This sequence belongs to the class-I aminoacyl-tRNA synthetase family. The cofactor is Zn(2+).

The protein resides in the plastid. It localises to the chloroplast. Its subcellular location is the mitochondrion. It catalyses the reaction tRNA(Cys) + L-cysteine + ATP = L-cysteinyl-tRNA(Cys) + AMP + diphosphate. Functionally, nuclear genome-encoded factor required for normal assembly of chloroplast polysomes. The chain is Cysteine--tRNA ligase CPS1, chloroplastic/mitochondrial from Zea mays (Maize).